The sequence spans 182 residues: MHIDMGMLVLIFIINFAYITLNTVRFLLVMRGYRYFAAFASVIEITIYVLGLSLVLNRLNNPINLVVYALGYGVGVYVGMVIEDRLALGYTMISVILPDPKSSLPGVLRENGFGVTQHAAYGLEGERLELEILAPRKNERRLYGLIKDAAPNAFVIAYEPRYISGGFWLKRVKRRNARRKKQ.

The next 3 membrane-spanning stretches (helical) occupy residues methionine 1–leucine 21, phenylalanine 36–leucine 56, and proline 62–isoleucine 82.

It belongs to the UPF0316 family.

The protein localises to the cell membrane. The chain is UPF0316 protein lp_1140 from Lactiplantibacillus plantarum (strain ATCC BAA-793 / NCIMB 8826 / WCFS1) (Lactobacillus plantarum).